Here is a 99-residue protein sequence, read N- to C-terminus: Cell cycle protein GpsB (99 aa).

Residues 34–71 are a coiled coil; that stretch reads LDMIIKDYETFHQEIEELQQENLQLKKQLEEASKKQPV.

Belongs to the GpsB family. As to quaternary structure, forms polymers through the coiled coil domains. Interacts with PBP1, MreC and EzrA.

It localises to the cytoplasm. Its function is as follows. Divisome component that associates with the complex late in its assembly, after the Z-ring is formed, and is dependent on DivIC and PBP2B for its recruitment to the divisome. Together with EzrA, is a key component of the system that regulates PBP1 localization during cell cycle progression. Its main role could be the removal of PBP1 from the cell pole after pole maturation is completed. Also contributes to the recruitment of PBP1 to the division complex. Not essential for septum formation. This Bacillus velezensis (strain DSM 23117 / BGSC 10A6 / LMG 26770 / FZB42) (Bacillus amyloliquefaciens subsp. plantarum) protein is Cell cycle protein GpsB.